The chain runs to 207 residues: Lipid A acyltransferase PagP (207 aa).

An N-terminal signal peptide occupies residues 1-24 (MKFDLTTAYTLSIPLLASSGTVLA). Catalysis depends on residues His79, Asp122, and Ser123.

The protein belongs to the lipid A palmitoyltransferase family. As to quaternary structure, homodimer.

It localises to the cell outer membrane. The enzyme catalyses a lipid A + a 1,2-diacyl-sn-glycero-3-phosphocholine = a hepta-acyl lipid A + a 2-acyl-sn-glycero-3-phosphocholine. The catalysed reaction is a lipid IVA + a 1,2-diacyl-sn-glycero-3-phosphocholine = a lipid IVB + a 2-acyl-sn-glycero-3-phosphocholine. It catalyses the reaction a lipid IIA + a 1,2-diacyl-sn-glycero-3-phosphocholine = a lipid IIB + a 2-acyl-sn-glycero-3-phosphocholine. In terms of biological role, transfers a fatty acid residue from the sn-1 position of a phospholipid to the N-linked hydroxyfatty acid chain on the proximal unit of lipid A or its precursors. This Photorhabdus asymbiotica subsp. asymbiotica (strain ATCC 43949 / 3105-77) (Xenorhabdus luminescens (strain 2)) protein is Lipid A acyltransferase PagP.